We begin with the raw amino-acid sequence, 196 residues long: Phosphoheptose isomerase (196 aa).

The SIS domain occupies 33 to 192 (LIQSLKNGGK…ESECGENGNT (160 aa)). A substrate-binding site is contributed by 48–50 (NGG). The Zn(2+) site is built by histidine 57 and glutamate 61. Residues glutamate 61, 90–91 (ND), 116–118 (STS), serine 121, and glutamine 168 contribute to the substrate site. Zn(2+) is bound by residues glutamine 168 and histidine 176.

This sequence belongs to the SIS family. GmhA subfamily. Homotetramer. It depends on Zn(2+) as a cofactor.

Its subcellular location is the cytoplasm. It catalyses the reaction 2 D-sedoheptulose 7-phosphate = D-glycero-alpha-D-manno-heptose 7-phosphate + D-glycero-beta-D-manno-heptose 7-phosphate. The protein operates within carbohydrate biosynthesis; D-glycero-D-manno-heptose 7-phosphate biosynthesis; D-glycero-alpha-D-manno-heptose 7-phosphate and D-glycero-beta-D-manno-heptose 7-phosphate from sedoheptulose 7-phosphate: step 1/1. Catalyzes the isomerization of sedoheptulose 7-phosphate in D-glycero-D-manno-heptose 7-phosphate. The chain is Phosphoheptose isomerase from Helicobacter hepaticus (strain ATCC 51449 / 3B1).